The primary structure comprises 149 residues: Transcriptional repressor NrdR (149 aa).

A zinc finger spans residues 3–34 (CPFCTAKDTKVIDSRLVGGGHQVRRRRECNDC). The region spanning 49–139 (PRVIKQDGSR…VYRSFEDIRE (91 aa)) is the ATP-cone domain.

The protein belongs to the NrdR family. Zn(2+) is required as a cofactor.

Negatively regulates transcription of bacterial ribonucleotide reductase nrd genes and operons by binding to NrdR-boxes. The sequence is that of Transcriptional repressor NrdR from Pseudoalteromonas translucida (strain TAC 125).